The following is a 262-amino-acid chain: Type III pantothenate kinase (262 aa).

An ATP-binding site is contributed by 5-12; the sequence is DAGNTRSK. Substrate contacts are provided by residues tyrosine 102 and 110–113; that span reads GSDR. Aspartate 112 (proton acceptor) is an active-site residue. Residue aspartate 132 coordinates K(+). Residue threonine 135 participates in ATP binding. Residue threonine 190 coordinates substrate.

Belongs to the type III pantothenate kinase family. Homodimer. NH4(+) is required as a cofactor. It depends on K(+) as a cofactor.

It localises to the cytoplasm. It carries out the reaction (R)-pantothenate + ATP = (R)-4'-phosphopantothenate + ADP + H(+). The protein operates within cofactor biosynthesis; coenzyme A biosynthesis; CoA from (R)-pantothenate: step 1/5. Catalyzes the phosphorylation of pantothenate (Pan), the first step in CoA biosynthesis. The polypeptide is Type III pantothenate kinase (Idiomarina loihiensis (strain ATCC BAA-735 / DSM 15497 / L2-TR)).